Consider the following 197-residue polypeptide: Phosphoheptose isomerase (197 aa).

The SIS domain occupies 34–196; that stretch reads MVNCLLGGNK…DRTLFPQDEQ (163 aa). 49–51 is a binding site for substrate; that stretch reads NGG. Zn(2+) contacts are provided by His58 and Glu62. Residues Glu62, 91–92, 117–119, Ser122, and Gln172 contribute to the substrate site; these read ND and STS. Positions 172 and 180 each coordinate Zn(2+).

It belongs to the SIS family. GmhA subfamily. As to quaternary structure, homotetramer. Requires Zn(2+) as cofactor.

It localises to the cytoplasm. It carries out the reaction 2 D-sedoheptulose 7-phosphate = D-glycero-alpha-D-manno-heptose 7-phosphate + D-glycero-beta-D-manno-heptose 7-phosphate. It participates in carbohydrate biosynthesis; D-glycero-D-manno-heptose 7-phosphate biosynthesis; D-glycero-alpha-D-manno-heptose 7-phosphate and D-glycero-beta-D-manno-heptose 7-phosphate from sedoheptulose 7-phosphate: step 1/1. Catalyzes the isomerization of sedoheptulose 7-phosphate in D-glycero-D-manno-heptose 7-phosphate. In Shewanella pealeana (strain ATCC 700345 / ANG-SQ1), this protein is Phosphoheptose isomerase.